The sequence spans 141 residues: Nucleoside diphosphate kinase (141 aa).

ATP is bound by residues Lys11, Phe59, Arg87, Thr93, Arg104, and Asn114. Residue His117 is the Pros-phosphohistidine intermediate of the active site.

The protein belongs to the NDK family. Homotetramer. It depends on Mg(2+) as a cofactor.

Its subcellular location is the cytoplasm. The enzyme catalyses a 2'-deoxyribonucleoside 5'-diphosphate + ATP = a 2'-deoxyribonucleoside 5'-triphosphate + ADP. It catalyses the reaction a ribonucleoside 5'-diphosphate + ATP = a ribonucleoside 5'-triphosphate + ADP. Major role in the synthesis of nucleoside triphosphates other than ATP. The ATP gamma phosphate is transferred to the NDP beta phosphate via a ping-pong mechanism, using a phosphorylated active-site intermediate. The polypeptide is Nucleoside diphosphate kinase (Haemophilus influenzae (strain 86-028NP)).